Consider the following 295-residue polypeptide: G1/S-specific cyclin-D1 (295 aa).

Positions 28-152 (LRAMLKAEET…VLVNKLKWNL (125 aa)) constitute a Cyclin N-terminal domain. The disordered stretch occupies residues 264–295 (QQNLDPKAAEEEEEEEEVDLACTPTDVRDVNI). K270 is covalently cross-linked (Glycyl lysine isopeptide (Lys-Gly) (interchain with G-Cter in ubiquitin)). Residues 273–282 (EEEEEEEEVD) show a composition bias toward acidic residues. A Phosphothreonine modification is found at T286.

The protein belongs to the cyclin family. Cyclin D subfamily. As to quaternary structure, interacts with either CDK4 or CDK6 protein kinase to form a serine/threonine kinase holoenzyme complex. The cyclin subunit imparts substrate specificity to the complex. Component of the ternary complex CCND1/CDK4/CDKN1B required for nuclear translocation and modulation of CDK4-mediated kinase activity. Interacts directly with CDKN1B. Can form similar complexes with either CDKN1A or CDKN2A. Interacts with UHRF2; the interaction ubiquitinates CCND1 and appears to occur independently of phosphorylation. Interacts with USP2. Interacts (via cyclin N-terminal domain) with INSM1 (via N-terminal region); the interaction competes with the binding of CCND1 to CDK4 during cell cycle progression and inhibits CDK4 activity. Interacts with CDK4; the interaction is prevented with the binding of CCND1 to INSM1 during cell cycle progression. Post-translationally, phosphorylation at Thr-286 by MAP kinases is required for ubiquitination and degradation by the DCX(AMBRA1) complex. It also plays an essential role for recognition by the FBXO31 component of SCF (SKP1-cullin-F-box) protein ligase complex following DNA damage. In terms of processing, ubiquitinated at Lys-270 by the DCX(AMBRA1) complex during the transition from G1 to S cell phase, leading to its degradation: ubiquitination is dependent on Thr-286 phosphorylation. The DCX(AMBRA1) complex represents the major regulator of CCND1 stability during the G1/S transition. Also ubiquitinated by the SCF(FBXO4) and Cul7-RING(FBXW8) ubiquitin-protein ligase complexes. Following DNA damage it is ubiquitinated by the SCF(FBXO31) protein ligase complex. SCF(FBXO31) ubiquitination is dependent on Thr-286 phosphorylation. Ubiquitinated also by UHRF2 apparently in a phosphorylation-independent manner. Ubiquitination leads to its degradation and G1 arrest. Deubiquitinated by USP2; leading to its stabilization.

The protein localises to the nucleus. It localises to the cytoplasm. The protein resides in the nucleus membrane. Functionally, regulatory component of the cyclin D1-CDK4 (DC) complex that phosphorylates and inhibits members of the retinoblastoma (RB) protein family including RB1 and regulates the cell-cycle during G(1)/S transition. Phosphorylation of RB1 allows dissociation of the transcription factor E2F from the RB/E2F complex and the subsequent transcription of E2F target genes which are responsible for the progression through the G(1) phase. Hypophosphorylates RB1 in early G(1) phase. Cyclin D-CDK4 complexes are major integrators of various mitogenenic and antimitogenic signals. Also a substrate for SMAD3, phosphorylating SMAD3 in a cell-cycle-dependent manner and repressing its transcriptional activity. Component of the ternary complex, cyclin D1/CDK4/CDKN1B, required for nuclear translocation and activity of the cyclin D-CDK4 complex. Exhibits transcriptional corepressor activity with INSM1 on the NEUROD1 and INS promoters in a cell cycle-independent manner. The chain is G1/S-specific cyclin-D1 (CCND1) from Bos taurus (Bovine).